Reading from the N-terminus, the 171-residue chain is MLDLSYSLERVLQEDPAARNKWEVLLLYPGIHALLCYRLAHALHKRRFYFIARALSQLARFITGIEIHPGAKIGRGLFIDHGMGVVIGETTEIGDDVTIYHGVTLGGTGKFKGKRHPTLGNRVVVGAGAKVLGAICVGDDVKIGANAVVLSDLPTGSTAVGSKAKTITKDR.

It belongs to the transferase hexapeptide repeat family.

The protein localises to the cytoplasm. The enzyme catalyses L-serine + acetyl-CoA = O-acetyl-L-serine + CoA. Its pathway is amino-acid biosynthesis; L-cysteine biosynthesis; L-cysteine from L-serine: step 1/2. In Helicobacter pylori (strain ATCC 700392 / 26695) (Campylobacter pylori), this protein is Serine acetyltransferase (cysE).